Here is a 431-residue protein sequence, read N- to C-terminus: V-type ATP synthase beta chain (431 aa).

It belongs to the ATPase alpha/beta chains family.

Produces ATP from ADP in the presence of a proton gradient across the membrane. The V-type beta chain is a regulatory subunit. This chain is V-type ATP synthase beta chain, found in Treponema denticola (strain ATCC 35405 / DSM 14222 / CIP 103919 / JCM 8153 / KCTC 15104).